The following is a 250-amino-acid chain: Peptidyl-tRNA hydrolase (250 aa).

Position 14 (tyrosine 14) interacts with tRNA. Residue histidine 19 is the Proton acceptor of the active site. The tRNA site is built by phenylalanine 64, asparagine 66, and asparagine 112. Residues 192-250 (MGDGNQRPGGVKTDPAQLEKAPPKAQSHIRQARQNQKKPNIPESGPMAEMLKKLLGKKD) form a disordered region. The segment covering 219–229 (HIRQARQNQKK) has biased composition (polar residues). Residues 241-250 (MLKKLLGKKD) are compositionally biased toward basic and acidic residues.

Belongs to the PTH family. In terms of assembly, monomer.

It is found in the cytoplasm. The enzyme catalyses an N-acyl-L-alpha-aminoacyl-tRNA + H2O = an N-acyl-L-amino acid + a tRNA + H(+). Hydrolyzes ribosome-free peptidyl-tRNAs (with 1 or more amino acids incorporated), which drop off the ribosome during protein synthesis, or as a result of ribosome stalling. Functionally, catalyzes the release of premature peptidyl moieties from peptidyl-tRNA molecules trapped in stalled 50S ribosomal subunits, and thus maintains levels of free tRNAs and 50S ribosomes. The sequence is that of Peptidyl-tRNA hydrolase from Brucella suis (strain ATCC 23445 / NCTC 10510).